The following is an 86-amino-acid chain: F(1)-ATPase inhibitor STF1, mitochondrial (86 aa).

The N-terminal 23 residues, 1 to 23 (MLNRCISRNTRLPVNLRIASRFY), are a transit peptide targeting the mitochondrion. At Ser-24 the chain carries Phosphoserine.

The protein belongs to the ATPase inhibitor family. In terms of assembly, monomer and homodimer. Monomeric at pH 5.0 and dimeric at either pH 6.5 or 8.0. The protein aggregates increasingly strongly with increasing pH.

It is found in the mitochondrion. Endogenous low-affinity ATPase inhibitor, which inhibits specifically the reverse ATPase reaction of mitochondrial F(1)F(0)-type ATP synthase. Found to stabilize, together with STF2, a complex of intrinsic ATPase inhibitor INH1 and proton-translocating ATPase in mitochondrial membranes. Binds directly to purified F1-ATPase. This Saccharomyces cerevisiae (strain ATCC 204508 / S288c) (Baker's yeast) protein is F(1)-ATPase inhibitor STF1, mitochondrial (STF1).